A 114-amino-acid polypeptide reads, in one-letter code: DNA polymerase epsilon subunit C (114 aa).

The segment at 91–114 (PDAVAPATGEEEQPKRRGRKPAQE) is disordered.

As to quaternary structure, heterotetramer. Consists of four subunits: POL2, DPB2, DPB3 and DPB4.

The protein localises to the nucleus. As accessory component of the DNA polymerase epsilon (DNA polymerase II) participates in chromosomal DNA replication. The polypeptide is DNA polymerase epsilon subunit C (DPB3) (Yarrowia lipolytica (strain CLIB 122 / E 150) (Yeast)).